The sequence spans 314 residues: Methionyl-tRNA formyltransferase (314 aa).

Residue 111 to 114 (SLLP) coordinates (6S)-5,6,7,8-tetrahydrofolate.

Belongs to the Fmt family.

The catalysed reaction is L-methionyl-tRNA(fMet) + (6R)-10-formyltetrahydrofolate = N-formyl-L-methionyl-tRNA(fMet) + (6S)-5,6,7,8-tetrahydrofolate + H(+). Its function is as follows. Attaches a formyl group to the free amino group of methionyl-tRNA(fMet). The formyl group appears to play a dual role in the initiator identity of N-formylmethionyl-tRNA by promoting its recognition by IF2 and preventing the misappropriation of this tRNA by the elongation apparatus. This Nitrobacter winogradskyi (strain ATCC 25391 / DSM 10237 / CIP 104748 / NCIMB 11846 / Nb-255) protein is Methionyl-tRNA formyltransferase.